Consider the following 374-residue polypeptide: Carbamoyl phosphate synthase small chain (374 aa).

Positions 1-183 are CPSase; it reads MVLADGQMIW…QNGYSVVDNQ (183 aa). Positions 41, 235, and 237 each coordinate L-glutamine. A Glutamine amidotransferase type-1 domain is found at 187–374; sequence HVVAIDYGLK…FIDLIAKERP (188 aa). Cys264 (nucleophile) is an active-site residue. 5 residues coordinate L-glutamine: Leu265, Gln268, Asn306, Gly308, and Phe309. Active-site residues include His348 and Glu350.

This sequence belongs to the CarA family. Composed of two chains; the small (or glutamine) chain promotes the hydrolysis of glutamine to ammonia, which is used by the large (or ammonia) chain to synthesize carbamoyl phosphate. Tetramer of heterodimers (alpha,beta)4.

It carries out the reaction hydrogencarbonate + L-glutamine + 2 ATP + H2O = carbamoyl phosphate + L-glutamate + 2 ADP + phosphate + 2 H(+). The enzyme catalyses L-glutamine + H2O = L-glutamate + NH4(+). It participates in amino-acid biosynthesis; L-arginine biosynthesis; carbamoyl phosphate from bicarbonate: step 1/1. The protein operates within pyrimidine metabolism; UMP biosynthesis via de novo pathway; (S)-dihydroorotate from bicarbonate: step 1/3. In terms of biological role, small subunit of the glutamine-dependent carbamoyl phosphate synthetase (CPSase). CPSase catalyzes the formation of carbamoyl phosphate from the ammonia moiety of glutamine, carbonate, and phosphate donated by ATP, constituting the first step of 2 biosynthetic pathways, one leading to arginine and/or urea and the other to pyrimidine nucleotides. The small subunit (glutamine amidotransferase) binds and cleaves glutamine to supply the large subunit with the substrate ammonia. This is Carbamoyl phosphate synthase small chain from Zymomonas mobilis subsp. mobilis (strain ATCC 31821 / ZM4 / CP4).